Consider the following 29-residue polypeptide: Small toxic protein ZorO (29 aa).

Residues 10 to 27 form a helical membrane-spanning segment; it reads VLIAVLELLVALLRLIDL.

Its subcellular location is the cell inner membrane. Its function is as follows. Toxic component of a type I toxin-antitoxin (TA) system. Expression in the absence of its cognate antitoxin (small sRNA orzO) leads to cell stasis and a decrease in colony-forming units. Repression of ZorO toxicity requires base pairing between zorO mRNA and sRNA OrzO, as well as RNase III (rnc), suggesting the mRNA is degraded. Base pairing occurs between 18 bases in the 5' UTR of zorO mRNA and the 5' end of OrzO sRNA. sRNA OrzP, which differs only in 4 of these 18 bases, does not repress ZorO toxicity. Integration of the protein into the inner membrane damages membrane integrity and affects membrane potential. It leads to increased levels of hydroxyl radicals. This Escherichia coli O157:H7 protein is Small toxic protein ZorO.